The following is a 367-amino-acid chain: 2-aminoethylphosphonate--pyruvate transaminase (367 aa).

Position 194 is an N6-(pyridoxal phosphate)lysine (Lys194).

Belongs to the class-V pyridoxal-phosphate-dependent aminotransferase family. PhnW subfamily. In terms of assembly, homodimer. The cofactor is pyridoxal 5'-phosphate.

The catalysed reaction is (2-aminoethyl)phosphonate + pyruvate = phosphonoacetaldehyde + L-alanine. Involved in phosphonate degradation. The polypeptide is 2-aminoethylphosphonate--pyruvate transaminase (Klebsiella pneumoniae subsp. pneumoniae (strain ATCC 700721 / MGH 78578)).